Consider the following 301-residue polypeptide: Probable alpha-L-glutamate ligase (301 aa).

Residues 104–287 enclose the ATP-grasp domain; that stretch reads LQLLSRRGVG…VAGLIIQYLE (184 aa). Residues Lys141, 178–179, Asp187, and 211–213 contribute to the ATP site; these read EY and RSN. Positions 248, 260, and 262 each coordinate Mg(2+). 3 residues coordinate Mn(2+): Asp248, Glu260, and Asn262.

It belongs to the RimK family. Requires Mg(2+) as cofactor. Mn(2+) is required as a cofactor.

This Stutzerimonas stutzeri (strain A1501) (Pseudomonas stutzeri) protein is Probable alpha-L-glutamate ligase.